The chain runs to 130 residues: Small ribosomal subunit protein uS9 (130 aa).

Belongs to the universal ribosomal protein uS9 family.

This is Small ribosomal subunit protein uS9 from Thioalkalivibrio sulfidiphilus (strain HL-EbGR7).